The following is a 101-amino-acid chain: Integration host factor subunit beta (101 aa).

Residues Ala-58 to Ala-101 are disordered. A compositionally biased stretch (basic and acidic residues) spans Thr-82–Arg-92.

It belongs to the bacterial histone-like protein family. As to quaternary structure, heterodimer of an alpha and a beta chain.

Its function is as follows. This protein is one of the two subunits of integration host factor, a specific DNA-binding protein that functions in genetic recombination as well as in transcriptional and translational control. The protein is Integration host factor subunit beta of Rhodopseudomonas palustris (strain BisB18).